The chain runs to 997 residues: Sorting nexin-19 (997 aa).

One can recognise a PXA domain in the interval 95–273 (ERQLEQEINR…ILVSIFSKYR (179 aa)). 2 disordered regions span residues 313 to 333 (SSPA…SPEI) and 413 to 437 (GALE…APGT). Residues 422–435 (GSECMEGAEAEEAP) show a composition bias toward acidic residues. Residues 538–668 (LRITGTITAR…EFLALNTDAR (131 aa)) form the PX domain. A 1,2-diacyl-sn-glycero-3-phospho-(1D-myo-inositol-3-phosphate) contacts are provided by Arg-587 and Arg-634. The interval 697–728 (FPRSEPQSPTEELSEAENESKPQTEGKKASKS) is disordered. The segment covering 714–724 (NESKPQTEGKK) has biased composition (basic and acidic residues).

It belongs to the sorting nexin family. As to quaternary structure, interacts with PTPRN.

It localises to the early endosome membrane. The protein resides in the cytoplasmic vesicle membrane. Its function is as follows. Plays a role in intracellular vesicle trafficking and exocytosis. May play a role in maintaining insulin-containing dense core vesicles in pancreatic beta-cells and in preventing their degradation. May play a role in insulin secretion. Interacts with membranes containing phosphatidylinositol 3-phosphate (PtdIns(3P)). In Mus musculus (Mouse), this protein is Sorting nexin-19.